Consider the following 469-residue polypeptide: Argininosuccinate lyase (469 aa).

The protein belongs to the lyase 1 family. Argininosuccinate lyase subfamily.

Its subcellular location is the cytoplasm. The enzyme catalyses 2-(N(omega)-L-arginino)succinate = fumarate + L-arginine. Its pathway is amino-acid biosynthesis; L-arginine biosynthesis; L-arginine from L-ornithine and carbamoyl phosphate: step 3/3. The protein is Argininosuccinate lyase of Burkholderia mallei (strain NCTC 10247).